Reading from the N-terminus, the 356-residue chain is UDP-N-acetylglucosamine--N-acetylmuramyl-(pentapeptide) pyrophosphoryl-undecaprenol N-acetylglucosamine transferase (356 aa).

The UDP-N-acetyl-alpha-D-glucosamine site is built by Ser195 and Gln287.

This sequence belongs to the glycosyltransferase 28 family. MurG subfamily.

The protein resides in the cell membrane. It carries out the reaction Mur2Ac(oyl-L-Ala-gamma-D-Glu-L-Lys-D-Ala-D-Ala)-di-trans,octa-cis-undecaprenyl diphosphate + UDP-N-acetyl-alpha-D-glucosamine = beta-D-GlcNAc-(1-&gt;4)-Mur2Ac(oyl-L-Ala-gamma-D-Glu-L-Lys-D-Ala-D-Ala)-di-trans,octa-cis-undecaprenyl diphosphate + UDP + H(+). It functions in the pathway cell wall biogenesis; peptidoglycan biosynthesis. Cell wall formation. Catalyzes the transfer of a GlcNAc subunit on undecaprenyl-pyrophosphoryl-MurNAc-pentapeptide (lipid intermediate I) to form undecaprenyl-pyrophosphoryl-MurNAc-(pentapeptide)GlcNAc (lipid intermediate II). The chain is UDP-N-acetylglucosamine--N-acetylmuramyl-(pentapeptide) pyrophosphoryl-undecaprenol N-acetylglucosamine transferase from Streptococcus sanguinis (strain SK36).